Consider the following 854-residue polypeptide: Protein asteroid (854 aa).

A disordered region spans residues 368–427; that stretch reads SEEECSDDEHSSSSDEKFSDVEEGEDQEEADNQDEEQQEENQDVDSGDEEEEEADEGLEL. Residues 375-387 show a composition bias toward basic and acidic residues; that stretch reads DEHSSSSDEKFSD. The span at 388 to 427 shows a compositional bias: acidic residues; sequence VEEGEDQEEADNQDEEQQEENQDVDSGDEEEEEADEGLEL.

The protein belongs to the asteroid family. Expressed in the proliferative tissues of embryos and in the mitotically active tissue anterior to the morphogenetic furrow in eye imaginal disks.

Functionally, may function in EGF receptor signaling. May play a role in compound eye morphogenesis. The polypeptide is Protein asteroid (ast) (Drosophila melanogaster (Fruit fly)).